We begin with the raw amino-acid sequence, 224 residues long: DNA mismatch repair protein MutH (224 aa).

Belongs to the MutH family.

The protein resides in the cytoplasm. In terms of biological role, sequence-specific endonuclease that cleaves unmethylated GATC sequences. It is involved in DNA mismatch repair. The polypeptide is DNA mismatch repair protein MutH (Histophilus somni (strain 2336) (Haemophilus somnus)).